The following is an 892-amino-acid chain: von Willebrand factor A domain-containing protein 7 (892 aa).

The first 27 residues, 1–27 (MLPVEVPLSQLGPPVLLLQLLLPPTSA), serve as a signal peptide directing secretion. N-linked (GlcNAc...) asparagine glycosylation is present at N54. Positions 231-272 (YFGTNPPKPPGKCSHGGRFDQSSSQPPRGGINKDSTSPSFSP) are disordered. The 183-residue stretch at 313 to 495 (ASSLSFVLDT…HIRDVAAVVG (183 aa)) folds into the VWFA domain.

It localises to the secreted. In Rattus norvegicus (Rat), this protein is von Willebrand factor A domain-containing protein 7 (Vwa7).